Here is a 343-residue protein sequence, read N- to C-terminus: Anthranilate phosphoribosyltransferase (343 aa).

5-phospho-alpha-D-ribose 1-diphosphate contacts are provided by residues Gly83, 86 to 87 (GD), Thr91, 93 to 96 (NIST), 111 to 119 (KHGGRSVSS), and Ser123. Gly83 lines the anthranilate pocket. A Mg(2+)-binding site is contributed by Ser95. Residue Arg169 participates in anthranilate binding. Mg(2+) is bound by residues Asp228 and Glu229.

This sequence belongs to the anthranilate phosphoribosyltransferase family. In terms of assembly, homodimer. It depends on Mg(2+) as a cofactor.

It carries out the reaction N-(5-phospho-beta-D-ribosyl)anthranilate + diphosphate = 5-phospho-alpha-D-ribose 1-diphosphate + anthranilate. It participates in amino-acid biosynthesis; L-tryptophan biosynthesis; L-tryptophan from chorismate: step 2/5. Its function is as follows. Catalyzes the transfer of the phosphoribosyl group of 5-phosphorylribose-1-pyrophosphate (PRPP) to anthranilate to yield N-(5'-phosphoribosyl)-anthranilate (PRA). This is Anthranilate phosphoribosyltransferase from Thiobacillus denitrificans (strain ATCC 25259 / T1).